We begin with the raw amino-acid sequence, 103 residues long: Small ribosomal subunit protein uS10 (103 aa).

Belongs to the universal ribosomal protein uS10 family. Part of the 30S ribosomal subunit.

In terms of biological role, involved in the binding of tRNA to the ribosomes. The chain is Small ribosomal subunit protein uS10 from Wigglesworthia glossinidia brevipalpis.